The sequence spans 1297 residues: DNA-directed RNA polymerase subunit beta' (1297 aa).

Zn(2+)-binding residues include Cys-60, Cys-62, Cys-75, and Cys-78. Mg(2+) is bound by residues Asp-535, Asp-537, and Asp-539. 4 residues coordinate Zn(2+): Cys-883, Cys-961, Cys-968, and Cys-971.

Belongs to the RNA polymerase beta' chain family. As to quaternary structure, the RNAP catalytic core consists of 2 alpha, 1 beta, 1 beta' and 1 omega subunit. When a sigma factor is associated with the core the holoenzyme is formed, which can initiate transcription. Mg(2+) serves as cofactor. It depends on Zn(2+) as a cofactor.

It carries out the reaction RNA(n) + a ribonucleoside 5'-triphosphate = RNA(n+1) + diphosphate. Functionally, DNA-dependent RNA polymerase catalyzes the transcription of DNA into RNA using the four ribonucleoside triphosphates as substrates. This chain is DNA-directed RNA polymerase subunit beta', found in Salinispora tropica (strain ATCC BAA-916 / DSM 44818 / JCM 13857 / NBRC 105044 / CNB-440).